Reading from the N-terminus, the 206-residue chain is Sclerostin domain-containing protein 1 (206 aa).

The N-terminal stretch at 1 to 23 is a signal peptide; that stretch reads MLPPAIHFYLLPLACILMKSCLA. N-linked (GlcNAc...) asparagine glycosylation is present at N47. 4 disulfide bridges follow: C75–C133, C89–C147, C100–C163, and C104–C165. Residues 75–170 form the CTCK domain; that stretch reads CRELRSTKYI…TACKCKRYTR (96 aa). A glycan (N-linked (GlcNAc...) asparagine) is linked at N173. Residues 176-206 are disordered; the sequence is SHNFESMSPAKPVQHHRERKRASKSSKHSMS. A compositionally biased stretch (basic residues) spans 188 to 206; it reads VQHHRERKRASKSSKHSMS.

It belongs to the sclerostin family. Interacts with BMP2, BMP4, BMP6 and BMP7 with high affinity.

It localises to the secreted. In terms of biological role, directly antagonizes activity of BMP2, BMP4, BMP6 and BMP7 in a dose-dependent manner. Enhances Wnt signaling and inhibits TGF-beta signaling. May be involved in the onset of endometrial receptivity for implantation/sensitization for the decidual cell reaction. This is Sclerostin domain-containing protein 1 (SOSTDC1) from Pongo abelii (Sumatran orangutan).